Here is a 146-residue protein sequence, read N- to C-terminus: Prostaglandin E synthase 3 (146 aa).

The CS domain occupies 1–76 (VFIEFCVEDS…ESGQAWPRLT (76 aa)). Residues 110–146 (SEMMNNMGGDDDVDLPEVDGADDDSPDSDDEKMPDLE) are disordered. The span at 118–139 (GDDDVDLPEVDGADDDSPDSDD) shows a compositional bias: acidic residues.

Belongs to the p23/wos2 family. In terms of assembly, binds to telomerase. Binds to the progesterone receptor.

The protein localises to the cytoplasm. The enzyme catalyses prostaglandin H2 = prostaglandin E2. The protein operates within lipid metabolism; prostaglandin biosynthesis. Molecular chaperone. This is Prostaglandin E synthase 3 (PTGES3) from Gallus gallus (Chicken).